The primary structure comprises 137 residues: uncharacterized protein (137 aa).

Belongs to the ycf72 family.

The protein localises to the plastid. It is found in the chloroplast. This is an uncharacterized protein from Saccharum hybrid (Sugarcane).